Consider the following 45-residue polypeptide: Photosystem II reaction center protein K (45 aa).

Positions 1–8 (MEAALLLA) are excised as a propeptide. A helical transmembrane segment spans residues 24–44 (LPLIPLFFLLLAFVWQAAVGF).

It belongs to the PsbK family. As to quaternary structure, PSII is composed of 1 copy each of membrane proteins PsbA, PsbB, PsbC, PsbD, PsbE, PsbF, PsbH, PsbI, PsbJ, PsbK, PsbL, PsbM, PsbT, PsbX, PsbY, PsbZ, Psb30/Ycf12, peripheral proteins PsbO, CyanoQ (PsbQ), PsbU, PsbV and a large number of cofactors. It forms dimeric complexes.

It is found in the cellular thylakoid membrane. One of the components of the core complex of photosystem II (PSII). PSII is a light-driven water:plastoquinone oxidoreductase that uses light energy to abstract electrons from H(2)O, generating O(2) and a proton gradient subsequently used for ATP formation. It consists of a core antenna complex that captures photons, and an electron transfer chain that converts photonic excitation into a charge separation. In Picosynechococcus sp. (strain ATCC 27264 / PCC 7002 / PR-6) (Agmenellum quadruplicatum), this protein is Photosystem II reaction center protein K.